The following is a 496-amino-acid chain: Tyrosine-protein kinase Srms (496 aa).

The SH3 domain maps to 55–116 (PRARLFRALY…PVTYLAKATP (62 aa)). The 93-residue stretch at 124–216 (WYFSGISRAQ…LIQNPLLQPC (93 aa)) folds into the SH2 domain. The region spanning 234 to 495 (FVLRRKLGEG…AINRRLHLGL (262 aa)) is the Protein kinase domain. ATP is bound by residues 240–248 (LGEGFFGEV) and Lys262. The Proton acceptor role is filled by Asp354. Phosphotyrosine; by autocatalysis is present on Tyr384.

It belongs to the protein kinase superfamily. Tyr protein kinase family. SRC subfamily. As to quaternary structure, interacts (via the SH2 and SH3 domains) with DOK1. Interacts with KHDRBS1/SAM68 and VIM. As to expression, higher expression in liver, lung, thymus and skin than in brain, kidney, heart and spleen. In skin, highly expressed in keratinocytes. Abundant in lung, liver, spleen, kidney and testis and is also detected in the cerebrum.

Its subcellular location is the cytoplasm. The catalysed reaction is L-tyrosyl-[protein] + ATP = O-phospho-L-tyrosyl-[protein] + ADP + H(+). Functionally, non-receptor tyrosine-protein kinase which phosphorylates DOK1 on tyrosine residues. Also phosphorylates KHDRBS1/SAM68 and VIM on tyrosine residues. Phosphorylation of KHDRBS1 is EGF-dependent. Phosphorylates OTUB1, promoting deubiquitination of RPTOR. In Mus musculus (Mouse), this protein is Tyrosine-protein kinase Srms (Srms).